Here is a 208-residue protein sequence, read N- to C-terminus: Urease accessory protein UreG (208 aa).

10–17 (GPVGSGKT) serves as a coordination point for GTP.

This sequence belongs to the SIMIBI class G3E GTPase family. UreG subfamily. In terms of assembly, homodimer. UreD, UreF and UreG form a complex that acts as a GTP-hydrolysis-dependent molecular chaperone, activating the urease apoprotein by helping to assemble the nickel containing metallocenter of UreC. The UreE protein probably delivers the nickel.

The protein localises to the cytoplasm. In terms of biological role, facilitates the functional incorporation of the urease nickel metallocenter. This process requires GTP hydrolysis, probably effectuated by UreG. The polypeptide is Urease accessory protein UreG (Halalkalibacterium halodurans (strain ATCC BAA-125 / DSM 18197 / FERM 7344 / JCM 9153 / C-125) (Bacillus halodurans)).